The sequence spans 227 residues: uncharacterized protein (227 aa).

Residues 2–115 enclose the Response regulatory domain; the sequence is KILMIEDNVS…TLVARIKAVI (114 aa). Aspartate 51 carries the 4-aspartylphosphate modification. Positions 128–226 form a DNA-binding region, ompR/PhoB-type; it reads EDMIETECFT…VWGVGYKFDE (99 aa).

Post-translationally, phosphorylated by YclK.

The protein localises to the cytoplasm. Functionally, could be member of the two-component regulatory system YclK/YclJ. This is an uncharacterized protein from Bacillus subtilis (strain 168).